The chain runs to 226 residues: Protein DEHYDRATION-INDUCED 19 (226 aa).

The interval 158–208 is disordered; that stretch reads FPTSDTEETSKPPISIPDDASVIKETPAQPWDSSIDSSLTREEREQKRKQA. Residues 196 to 205 are compositionally biased toward basic and acidic residues; sequence LTREEREQKR.

Belongs to the Di19 family.

The protein is Protein DEHYDRATION-INDUCED 19 (DI19-1) of Oryza sativa subsp. japonica (Rice).